A 79-amino-acid chain; its full sequence is D-alanyl carrier protein (79 aa).

The region spanning 1 to 77 (MDIKSEVIEI…KIIAGIVELQ (77 aa)) is the Carrier domain. Residue serine 35 is modified to O-(pantetheine 4'-phosphoryl)serine.

The protein belongs to the DltC family. 4'-phosphopantetheine is transferred from CoA to a specific serine of apo-DCP.

It localises to the cytoplasm. The protein operates within cell wall biogenesis; lipoteichoic acid biosynthesis. In terms of biological role, carrier protein involved in the D-alanylation of lipoteichoic acid (LTA). The loading of thioester-linked D-alanine onto DltC is catalyzed by D-alanine--D-alanyl carrier protein ligase DltA. The DltC-carried D-alanyl group is further transferred to cell membrane phosphatidylglycerol (PG) by forming an ester bond, probably catalyzed by DltD. D-alanylation of LTA plays an important role in modulating the properties of the cell wall in Gram-positive bacteria, influencing the net charge of the cell wall. The protein is D-alanyl carrier protein of Streptococcus pneumoniae serotype 2 (strain D39 / NCTC 7466).